The chain runs to 455 residues: Killer cell immunoglobulin-like receptor 3DL2 (455 aa).

An N-terminal signal peptide occupies residues 1-21 (MSLTVVSMACVGFFLLQGAWP). At 22-340 (LMGGQDKPFL…SKSGICRHLH (319 aa)) the chain is on the extracellular side. Ig-like C2-type domains are found at residues 42-102 (GGHV…RPHS), 137-202 (GETV…VPHS), and 237-300 (GENV…FRAL). 2 disulfide bridges follow: Cys49-Cys95 and Cys144-Cys195. 4 N-linked (GlcNAc...) asparagine glycosylation sites follow: Asn179, Asn239, Asn273, and Asn306. Cys244 and Cys293 are joined by a disulfide. A helical membrane pass occupies residues 341–360 (VLIGTSVVIFLFILLLFFLL). The Cytoplasmic portion of the chain corresponds to 361–455 (YRWCSNKKNA…APQSGLEGVF (95 aa)).

It belongs to the immunoglobulin superfamily. In terms of assembly, interacts with peptide-free HLA-F open conformer. In terms of tissue distribution, expressed in astrocytes.

Its subcellular location is the cell membrane. Its function is as follows. Receptor on natural killer (NK) cells and T cells for MHC class I molecules. Upon binding of peptide-free HLA-F open conformer, negatively regulates NK and T cell effector functions. Acts as a receptor on astrocytes for HLA-F. Through interaction with HLA-F, may protect motor neurons from astrocyte-induced toxicity. The chain is Killer cell immunoglobulin-like receptor 3DL2 from Homo sapiens (Human).